The primary structure comprises 202 residues: MVIRPEDPEDYVAPAAQRVRAGTLLLANTDLLEPTFRRSVIYIVEHNEGGTLGVVLNRPSETAVYNVLPQWAKLAAKPKTMFIGGPVKRDAALCLAVLRIGADPDGVAGLRHVAGRLVMVDLDAEPDLIAPLVDGLRIFVGYSGWTIGQLKGEIERDDWIVLSALPSDVLVGKRADLWAQVLRRQPLLLSLLATHPIDVSRN.

It belongs to the UPF0301 (AlgH) family.

This Mycobacterium leprae (strain TN) protein is UPF0301 protein ML0028.